Consider the following 346-residue polypeptide: Hexosaminidase D (346 aa).

Glu-141 serves as the catalytic Proton donor.

This sequence belongs to the glycosyl hydrolase 20 family. As to quaternary structure, homodimer; disulfide-linked.

The protein localises to the cytoplasm. It localises to the nucleus. The protein resides in the extracellular vesicle. It catalyses the reaction Hydrolysis of terminal non-reducing N-acetyl-D-hexosamine residues in N-acetyl-beta-D-hexosaminides.. Its activity is regulated as follows. Inhibited by O-(2-acetamido-2-deoxy-D-glucopyranosylidene)amino N-phenylcarbamate (PUGNAc). Inhibited by galacto-NAG-thiazoline. Functionally, has hexosaminidase activity. Responsible for the cleavage of the monosaccharides N-acetylglucosamine (GlcNAc) and N-acetylgalactosamine (GalNAc) from cellular substrates. Has a preference for galactosaminide over glucosaminide substrates. This Bos taurus (Bovine) protein is Hexosaminidase D.